Here is a 126-residue protein sequence, read N- to C-terminus: Nascent polypeptide-associated complex protein (126 aa).

One can recognise an NAC-A/B domain in the interval 10–77; it reads PRMMKQMQKM…AKKVAKAEEK (68 aa).

Belongs to the NAC-alpha family. Homodimer. Interacts with the ribosome. Binds ribosomal RNA.

Contacts the emerging nascent chain on the ribosome. This Methanococcus maripaludis (strain C5 / ATCC BAA-1333) protein is Nascent polypeptide-associated complex protein.